A 545-amino-acid polypeptide reads, in one-letter code: Metal transporter NRAT1 (545 aa).

The next 12 helical transmembrane spans lie at 51–71, 84–104, 128–148, 155–175, 188–208, 234–254, 278–298, 333–353, 373–395, 398–418, 437–457, and 474–494; these read FLAH…PSNL, ELLW…TLAA, IFLW…EVLG, ILLK…TLLL, FIIA…LSYL, IALF…ALVL, LAFI…GSIC, VVYA…CTFA, LITR…PSGA, LIIL…IPLL, VVIA…FLVW, and GLIS…VVYL. The tract at residues 516–545 is disordered; sequence EAGGTPVVDASAADEDQPAPYRKDLADASM. The segment covering 536 to 545 has biased composition (basic and acidic residues); it reads YRKDLADASM.

It belongs to the NRAMP (TC 2.A.55) family. As to expression, expressed at low levels in roots.

The protein resides in the cell membrane. Its function is as follows. Metal transporter that transports the trivalent cation aluminum (Al(3+)), but does not seem to transport divalent cations such as iron (Fe(2+)), manganese (Mg(2+)) or Cadmium (Cd(2+)). Involved in Al tolerance by taking up Al in root cells, where it is detoxified by chelation with organic acid anions and sequestration into the vacuoles. This is Metal transporter NRAT1 (NRAT1) from Oryza sativa subsp. japonica (Rice).